The primary structure comprises 443 residues: Transcriptional adapter 2-alpha (443 aa).

A Phosphoserine; in variant Ser-6 modification is found at Pro-6. A ZZ-type zinc finger spans residues 12 to 69 (SDKPPCRGCSSYLMEPYIKCAECGPPPFFLCLQCFTRGFEYKKHQSDHTYEIMTSDFP). 8 residues coordinate Zn(2+): Cys-17, Cys-20, Cys-31, Cys-34, Cys-42, Cys-45, His-55, and His-59. Residues 70-122 (VLDPSWTAQEEMALLEAVMDCGFGNWQDVANQMCTKTKEECEKHYMKHFINNP) form the SANT domain. Glycyl lysine isopeptide (Lys-Gly) (interchain with G-Cter in SUMO2) cross-links involve residues Lys-132 and Lys-138. The interval 348–372 (SPSIPMASNSGRRSAPPLNLTGLPG) is disordered. Residues 356–443 (NSGRRSAPPL…LIREGYITKG (88 aa)) form the SWIRM domain. A DNA-binding region spans residues 426 to 435 (KTRKIYDFLI).

Interacts with GCN5 and NR3C1. Associated with the P/CAF protein in the PCAF complex. Component of the PCAF complex, at least composed of TADA2L/ADA2, TADA3L/ADA3, TAF5L/PAF65-beta, TAF6L/PAF65-alpha, TAF10/TAFII30, TAF12/TAFII20, TAF9/TAFII31 and TRRAP. Component of the ADA2A-containing complex (ATAC), composed of KAT14, KAT2A, TADA2L, TADA3L, ZZ3, MBIP, WDR5, YEATS2, CCDC101 and DR1. Interacts with CCDC134. As to expression, expressed in all tissues, but most abundantly in testis.

It is found in the nucleus. The protein resides in the chromosome. In terms of biological role, component of the ATAC complex, a complex with histone acetyltransferase activity on histones H3 and H4. Required for the function of some acidic activation domains, which activate transcription from a distant site. Binds double-stranded DNA. Binds dinucleosomes, probably at the linker region between neighboring nucleosomes. Plays a role in chromatin remodeling. May promote TP53/p53 'Lys-321' acetylation, leading to reduced TP53 stability and transcriptional activity. May also promote XRCC6 acetylation thus facilitating cell apoptosis in response to DNA damage. This chain is Transcriptional adapter 2-alpha (TADA2A), found in Homo sapiens (Human).